The sequence spans 193 residues: PXMP2/4 family protein 2 (193 aa).

4 helical membrane-spanning segments follow: residues 56–78, 96–116, 132–152, and 160–180; these read VATMSTVGIFYSGPMLHYWYRSL, IDQLLFAPVAIGGFMTVTNFI, LFYAVKINWLIWPAAQIINFS, and VLYSSIISIFWGMFLSHISFD.

Belongs to the peroxisomal membrane protein PXMP2/4 family.

The protein localises to the membrane. In Dictyostelium discoideum (Social amoeba), this protein is PXMP2/4 family protein 2.